The chain runs to 244 residues: Chalcone--flavanone isomerase (244 aa).

Positions 57, 122, and 199 each coordinate substrate.

The protein belongs to the chalcone isomerase family.

The enzyme catalyses a chalcone = a flavanone.. Its pathway is secondary metabolite biosynthesis; flavonoid biosynthesis. Functionally, catalyzes the intramolecular cyclization of bicyclic chalcones into tricyclic (S)-flavanones. Responsible for the isomerization of 4,2',4',6'-tetrahydroxychalcone (also termed chalcone) into naringenin. In Arabidopsis lyrata subsp. petraea (Northern rock-cress), this protein is Chalcone--flavanone isomerase (CHI).